Reading from the N-terminus, the 34-residue chain is Phalloidin proprotein (34 aa).

Residues 1–10 constitute a propeptide that is removed on maturation; the sequence is MSDINTTCLP. The segment at residues 11-17 is a cross-link (cyclopeptide (Ala-Pro)); the sequence is AWLATCP. Positions 12–16 form a cross-link, 2'-cysteinyl-6'-hydroxytryptophan sulfoxide (Trp-Cys); sequence WLATC. Positions 18 to 34 are excised as a propeptide; the sequence is CTGDDVNPTLTCGESLC.

It belongs to the MSDIN fungal toxin family. Processed by the macrocyclase-peptidase enzyme POPB to yield a toxic cyclic heptapeptide. POPB first removes 10 residues from the N-terminus. Conformational trapping of the remaining peptide forces the enzyme to release this intermediate rather than proceed to macrocyclization. The enzyme rebinds the remaining peptide in a different conformation and catalyzes macrocyclization of the N-terminal 7 residues.

Functionally, toxin that belongs to the bicyclic heptapeptides called phallotoxins. Although structurally related to amatoxins, phallotoxins have a different mode of action, which is the stabilization of F-actin. Phallotoxins are poisonous when administered parenterally, but not orally because of poor absorption. The sequence is that of Phalloidin proprotein from Amanita phalloides (Death cap).